The sequence spans 280 residues: Tryptophan synthase alpha chain (280 aa).

Residues Glu-49 and Asp-60 each act as proton acceptor in the active site.

Belongs to the TrpA family. As to quaternary structure, tetramer of two alpha and two beta chains.

The enzyme catalyses (1S,2R)-1-C-(indol-3-yl)glycerol 3-phosphate + L-serine = D-glyceraldehyde 3-phosphate + L-tryptophan + H2O. It functions in the pathway amino-acid biosynthesis; L-tryptophan biosynthesis; L-tryptophan from chorismate: step 5/5. The alpha subunit is responsible for the aldol cleavage of indoleglycerol phosphate to indole and glyceraldehyde 3-phosphate. The sequence is that of Tryptophan synthase alpha chain from Corynebacterium glutamicum (strain R).